A 255-amino-acid polypeptide reads, in one-letter code: uncharacterized protein (255 aa).

A signal peptide spans methionine 1 to alanine 18.

The protein belongs to the MlaA family.

This is an uncharacterized protein from Rickettsia bellii (strain RML369-C).